The primary structure comprises 149 residues: Golgi apparatus membrane protein tvp-18 (149 aa).

N11 carries N-linked (GlcNAc...) asparagine glycosylation. 4 consecutive transmembrane segments (helical) span residues 18–38 (WLGILSMILCFALGIANIFTF), 41–61 (IIIVFSVITLCFSFVILFVEV), 84–103 (NYTRAAAYGVMAVVVFLSCI), and 108–128 (SLLVPGIFLSFTGICYALAAL).

Belongs to the TVP18 family.

The protein localises to the golgi apparatus membrane. Functionally, golgi membrane protein involved in vesicular trafficking. The protein is Golgi apparatus membrane protein tvp-18 (tvp-18) of Neurospora crassa (strain ATCC 24698 / 74-OR23-1A / CBS 708.71 / DSM 1257 / FGSC 987).